We begin with the raw amino-acid sequence, 162 residues long: Cyclic pyranopterin monophosphate synthase (162 aa).

Substrate contacts are provided by residues 75–77 (MCH) and 116–117 (ME). The active site involves aspartate 131.

Belongs to the MoaC family. Homohexamer; trimer of dimers.

The catalysed reaction is (8S)-3',8-cyclo-7,8-dihydroguanosine 5'-triphosphate = cyclic pyranopterin phosphate + diphosphate. It functions in the pathway cofactor biosynthesis; molybdopterin biosynthesis. In terms of biological role, catalyzes the conversion of (8S)-3',8-cyclo-7,8-dihydroguanosine 5'-triphosphate to cyclic pyranopterin monophosphate (cPMP). This is Cyclic pyranopterin monophosphate synthase from Staphylococcus epidermidis (strain ATCC 35984 / DSM 28319 / BCRC 17069 / CCUG 31568 / BM 3577 / RP62A).